Reading from the N-terminus, the 224-residue chain is Phosphoribosyltransferase domain-containing protein 1 (224 aa).

Mg(2+) is bound by residues Glu140 and Asp141. Residues 140 to 148 (EDIINTGRT), Lys172, 193 to 194 (FV), and Asp200 contribute to the GMP site. Asp200 contacts Mg(2+).

The protein belongs to the purine/pyrimidine phosphoribosyltransferase family.

This Xenopus laevis (African clawed frog) protein is Phosphoribosyltransferase domain-containing protein 1 (prtfdc1).